The sequence spans 565 residues: Membrane protein insertase YidC (565 aa).

The next 6 membrane-spanning stretches (helical) occupy residues 6-26 (VLLI…WGKN), 348-368 (LMAL…SLLH), 370-390 (WGWA…PLSA), 437-457 (GGCF…WVLV), 479-499 (PYFI…KLTP), and 516-536 (PLIF…YWVI).

Belongs to the OXA1/ALB3/YidC family. Type 1 subfamily. In terms of assembly, interacts with the Sec translocase complex via SecD. Specifically interacts with transmembrane segments of nascent integral membrane proteins during membrane integration.

It localises to the cell inner membrane. In terms of biological role, required for the insertion and/or proper folding and/or complex formation of integral membrane proteins into the membrane. Involved in integration of membrane proteins that insert both dependently and independently of the Sec translocase complex, as well as at least some lipoproteins. Aids folding of multispanning membrane proteins. This Xylella fastidiosa (strain M12) protein is Membrane protein insertase YidC.